The primary structure comprises 1224 residues: WD repeat-containing protein 11 (1224 aa).

2 WD repeats span residues 59-108 (KHKA…AQCE) and 111-154 (EHAK…KLWK). Phosphoserine is present on residues S205 and S209. The WD 3 repeat unit spans residues 354 to 393 (KTVRPFSMVCCPVNENAAALVVSDGRVMIWELKSAVCNRN). 2 positions are modified to phosphoserine: S402 and S406. 6 WD repeats span residues 471–510 (RMCP…LHKE), 566–605 (NDES…LLRE), 708–745 (GSMG…SRGI), 747–787 (THRS…MVSS), 793–831 (NVTF…ACFR), and 893–940 (SLSN…HSLS).

Component of the complex WDR11 composed of C17orf75, FAM91A1 and WDR11; FAM91A1 and WDR11 are required for proper location of the complex. Interacts (via the N-terminal and the central portion of the protein) with EMX1. Interacts with GLI3; the interaction associateS EMX1 with GLI3. Interacts with TBC1D23; this interaction may be indirect and recruits TBC1D23 to AP-1-derived vesicles. In terms of tissue distribution, ubiquitous.

It localises to the cytoplasm. The protein localises to the cytoskeleton. Its subcellular location is the cilium basal body. It is found in the nucleus. The protein resides in the cilium axoneme. It localises to the cytoplasmic vesicle. The protein localises to the golgi apparatus. Its subcellular location is the trans-Golgi network. Its function is as follows. Involved in the Hedgehog (Hh) signaling pathway, is essential for normal ciliogenesis. Regulates the proteolytic processing of GLI3 and cooperates with the transcription factor EMX1 in the induction of downstream Hh pathway gene expression and gonadotropin-releasing hormone production. WDR11 complex facilitates the tethering of Adaptor protein-1 complex (AP-1)-derived vesicles. WDR11 complex acts together with TBC1D23 to facilitate the golgin-mediated capture of vesicles generated using AP-1. The sequence is that of WD repeat-containing protein 11 (WDR11) from Homo sapiens (Human).